The sequence spans 129 residues: S-adenosylmethionine decarboxylase proenzyme (129 aa).

The active-site Schiff-base intermediate with substrate; via pyruvic acid is Ser63. Position 63 is a pyruvic acid (Ser); by autocatalysis (Ser63). His68 serves as the catalytic Proton acceptor; for processing activity. Cys83 (proton donor; for catalytic activity) is an active-site residue.

Belongs to the prokaryotic AdoMetDC family. Type 1 subfamily. In terms of assembly, heterotetramer of two alpha and two beta chains arranged as a dimer of alpha/beta heterodimers. It depends on pyruvate as a cofactor. Post-translationally, is synthesized initially as an inactive proenzyme. Formation of the active enzyme involves a self-maturation process in which the active site pyruvoyl group is generated from an internal serine residue via an autocatalytic post-translational modification. Two non-identical subunits are generated from the proenzyme in this reaction, and the pyruvate is formed at the N-terminus of the alpha chain, which is derived from the carboxyl end of the proenzyme. The post-translation cleavage follows an unusual pathway, termed non-hydrolytic serinolysis, in which the side chain hydroxyl group of the serine supplies its oxygen atom to form the C-terminus of the beta chain, while the remainder of the serine residue undergoes an oxidative deamination to produce ammonia and the pyruvoyl group blocking the N-terminus of the alpha chain.

It carries out the reaction S-adenosyl-L-methionine + H(+) = S-adenosyl 3-(methylsulfanyl)propylamine + CO2. Its pathway is amine and polyamine biosynthesis; S-adenosylmethioninamine biosynthesis; S-adenosylmethioninamine from S-adenosyl-L-methionine: step 1/1. Catalyzes the decarboxylation of S-adenosylmethionine to S-adenosylmethioninamine (dcAdoMet), the propylamine donor required for the synthesis of the polyamines spermine and spermidine from the diamine putrescine. This is S-adenosylmethionine decarboxylase proenzyme from Shouchella clausii (strain KSM-K16) (Alkalihalobacillus clausii).